The sequence spans 442 residues: uncharacterized protein (442 aa).

This is an uncharacterized protein from Sputnik virophage.